Reading from the N-terminus, the 202-residue chain is Probable molybdenum cofactor guanylyltransferase (202 aa).

GTP is bound by residues Leu-13–Gly-15, Lys-25, Asp-71, and Asp-103. Asp-103 is a Mg(2+) binding site.

Belongs to the MobA family. Mg(2+) serves as cofactor.

It localises to the cytoplasm. The enzyme catalyses Mo-molybdopterin + GTP + H(+) = Mo-molybdopterin guanine dinucleotide + diphosphate. Functionally, transfers a GMP moiety from GTP to Mo-molybdopterin (Mo-MPT) cofactor (Moco or molybdenum cofactor) to form Mo-molybdopterin guanine dinucleotide (Mo-MGD) cofactor. The polypeptide is Probable molybdenum cofactor guanylyltransferase (Opitutus terrae (strain DSM 11246 / JCM 15787 / PB90-1)).